The following is a 613-amino-acid chain: Azole resistance protein 1 (613 aa).

Residues 1-38 (MKGEPKTYSMSDLSYYGEKAQQQNEKQQKQYVVRRNST) are disordered. Over 1-70 (MKGEPKTYSM…PKGFILYASL (70 aa)) the chain is Extracellular. A helical membrane pass occupies residues 71 to 91 (IALALSLFLAALDIMIVSTII). Topologically, residues 92–102 (EEVAKQFGSYS) are cytoplasmic. The chain crosses the membrane as a helical span at residues 103–123 (EIGWLFTGYSLPNALLALIWG). At 124–134 (RIATPIGFKET) the chain is on the extracellular side. The chain crosses the membrane as a helical span at residues 135-155 (MLFAIVIFEIGSLISALANSM). Residues 156 to 163 (SMLIGGRV) are Cytoplasmic-facing. A helical membrane pass occupies residues 164 to 184 (IAGVGGCGIQSLSFVIGSTLV). The Extracellular segment spans residues 185–189 (EESQR). Residues 190 to 210 (GILIAVLSCSFAIASVVGPFL) traverse the membrane as a helical segment. The Cytoplasmic segment spans residues 211–221 (GGVFTSSVTWR). The helical transmembrane segment at 222–242 (WCFYVNLPIGGLAFFLFLFFY) threads the bilayer. Over 243-298 (NPGLSTFQETMDNIRKFPSQFIEIVRNVAYHLLKIKGFSKLNGWRKPFMELIFMYD) the chain is Extracellular. The helical transmembrane segment at 299-319 (IIEFVFCSAGFTCILLAFTFG) threads the bilayer. Topologically, residues 320 to 329 (GNRYAWNSAS) are cytoplasmic. The helical transmembrane segment at 330–350 (IIILFIIGIVLVVLAGIYDFL) threads the bilayer. At 351-375 (VFPKFNIVKATPHYQPLMSWTNIKK) the chain is on the extracellular side. A helical transmembrane segment spans residues 376–396 (PGIFTVNIALFLTCAGYISQF). At 397 to 414 (TYIVQYFQLIYNDSAWRA) the chain is on the cytoplasmic side. Residues 415 to 435 (AVHLVACIISTVVTAILCGAI) form a helical membrane-spanning segment. Residues 436–443 (TDKTRQIK) are Extracellular-facing. Residues 444–464 (PIIVISSIFGVVGAGILTLLN) traverse the membrane as a helical segment. Residues 465–472 (NNANNSAH) lie on the Cytoplasmic side of the membrane. A helical transmembrane segment spans residues 473-493 (IGLLILPGVAFGGLAQSSMLA). Topologically, residues 494 to 581 (SQIQLDKKSP…SKLGNIISES (88 aa)) are extracellular. Residues 582 to 602 (LTDVFYMALGFYALSLIFAVF) form a helical membrane-spanning segment. Over 603–613 (ASNKKVTASLR) the chain is Cytoplasmic.

It belongs to the major facilitator superfamily.

It is found in the cell membrane. Transporter protein required for adaptation to high stress imposed by low-chain organic acids, in particular by acetic acid, and for resistance to azoles, especially to ketoconazole and fluconazole. This chain is Azole resistance protein 1 (AZR1), found in Saccharomyces cerevisiae (strain ATCC 204508 / S288c) (Baker's yeast).